A 141-amino-acid polypeptide reads, in one-letter code: Nucleoside diphosphate kinase (141 aa).

6 residues coordinate ATP: lysine 10, phenylalanine 58, arginine 86, threonine 92, arginine 103, and asparagine 113. The Pros-phosphohistidine intermediate role is filled by histidine 116.

Belongs to the NDK family. Homotetramer. The cofactor is Mg(2+).

It is found in the cytoplasm. It carries out the reaction a 2'-deoxyribonucleoside 5'-diphosphate + ATP = a 2'-deoxyribonucleoside 5'-triphosphate + ADP. The catalysed reaction is a ribonucleoside 5'-diphosphate + ATP = a ribonucleoside 5'-triphosphate + ADP. Major role in the synthesis of nucleoside triphosphates other than ATP. The ATP gamma phosphate is transferred to the NDP beta phosphate via a ping-pong mechanism, using a phosphorylated active-site intermediate. The protein is Nucleoside diphosphate kinase of Hydrogenovibrio crunogenus (strain DSM 25203 / XCL-2) (Thiomicrospira crunogena).